An 86-amino-acid polypeptide reads, in one-letter code: Progonadoliberin-2 (86 aa).

The first 24 residues, 1–24 (MVHICRLLVLMGMLLCLSAQFASS), serve as a signal peptide directing secretion. At Gln25 the chain carries Pyrrolidone carboxylic acid. A Glycine amide modification is found at Gly34.

The protein belongs to the GnRH family.

It is found in the secreted. Stimulates the secretion of gonadotropins. In Rutilus rutilus (Roach), this protein is Progonadoliberin-2 (gnrh2).